An 82-amino-acid chain; its full sequence is Toxin NaTx-13 (82 aa).

Residues 6 to 70 (PGGYPVNQFK…KNSIEVFSCG (65 aa)) form the LCN-type CS-alpha/beta domain. 4 cysteine pairs are disulfide-bonded: Cys-16–Cys-69, Cys-20–Cys-44, Cys-30–Cys-49, and Cys-34–Cys-51.

Belongs to the long (4 C-C) scorpion toxin superfamily. Sodium channel inhibitor family. As to expression, expressed by the venom gland.

It is found in the secreted. Functionally, probable sodium channel inhibitor. This is Toxin NaTx-13 from Centruroides sculpturatus (Arizona bark scorpion).